Reading from the N-terminus, the 415-residue chain is Histidine--tRNA ligase (415 aa).

Belongs to the class-II aminoacyl-tRNA synthetase family. Homodimer.

Its subcellular location is the cytoplasm. The catalysed reaction is tRNA(His) + L-histidine + ATP = L-histidyl-tRNA(His) + AMP + diphosphate + H(+). The sequence is that of Histidine--tRNA ligase from Clostridium botulinum (strain Okra / Type B1).